Consider the following 480-residue polypeptide: MNFETVIGLEVHVELNTNSKIFSPTSAHFGNEQNTNTNVIDWSFPGVLPVLNKGVVDAGIKAALALNMDIHQHMHFDRKNYFYPDNPKAYQISQFDEPIGYNGWIEVQLEDGTTKKIGIERAHLEEDAGKNTHGTDGFSYVDLNRQGVPLIEIVSEADMRSPEEAYAYLTALKEVIQYTGISDVKMEEGSMRVDANISLRPYGQEEFGTKTELKNLNSFSNVRKGLEYEVQRQAKILRSGGVIRQETRRYDEASKSTILMRVKEGAADYRYFPEPDLPLFEISDEWIEEMRTELPEFPKDRRARYVAELGLSDYDANQLTATKVTSDFFEAAVALGGDAKQVSNWLQGEVAQFLNAEGKTLEEIQLTPENLVEMIAIIEDGTISSKIAKKVFVHLAKNGGGAREYVEKAGLVQISDPEVLIPIIHQVFADNEAAVADFKSGKRNADKAFTGFLMKATKGQANPQVALKLLAQELAKLKED.

The protein belongs to the GatB/GatE family. GatB subfamily. As to quaternary structure, heterotrimer of A, B and C subunits.

It carries out the reaction L-glutamyl-tRNA(Gln) + L-glutamine + ATP + H2O = L-glutaminyl-tRNA(Gln) + L-glutamate + ADP + phosphate + H(+). The enzyme catalyses L-aspartyl-tRNA(Asn) + L-glutamine + ATP + H2O = L-asparaginyl-tRNA(Asn) + L-glutamate + ADP + phosphate + 2 H(+). Allows the formation of correctly charged Asn-tRNA(Asn) or Gln-tRNA(Gln) through the transamidation of misacylated Asp-tRNA(Asn) or Glu-tRNA(Gln) in organisms which lack either or both of asparaginyl-tRNA or glutaminyl-tRNA synthetases. The reaction takes place in the presence of glutamine and ATP through an activated phospho-Asp-tRNA(Asn) or phospho-Glu-tRNA(Gln). This chain is Aspartyl/glutamyl-tRNA(Asn/Gln) amidotransferase subunit B, found in Streptococcus thermophilus (strain ATCC BAA-250 / LMG 18311).